The following is a 555-amino-acid chain: Bifunctional epoxide hydrolase 2 (555 aa).

The phosphatase stretch occupies residues 1 to 224; that stretch reads MALRAAVFDL…KVTGVQLLQT (224 aa). The Mg(2+) site is built by D9 and D11. N6-acetyllysine is present on K43. 123–124 is a binding site for phosphate; that stretch reads TN. D185 contributes to the Mg(2+) binding site. 2 positions are modified to N6-acetyllysine: K191 and K215. Residues 235 to 555 form an epoxide hydrolase region; sequence SALSHGYVLI…ARNPLVDSKL (321 aa). The AB hydrolase-1 domain occupies 259–531; sequence PAVCLCHGFP…CGHWTQIDKP (273 aa). D335 functions as the Nucleophile in the catalytic mechanism. S370 is modified (phosphoserine). Residue Y383 coordinates substrate. N6-succinyllysine is present on K455. Y466 serves as the catalytic Proton donor. K505 is modified (N6-succinyllysine). C522 is lipidated: S-(15-deoxy-Delta12,14-prostaglandin J2-9-yl)cysteine. Catalysis depends on H524, which acts as the Proton acceptor. The Microbody targeting signal signature appears at 553–555; it reads SKL. The residue at position 554 (K554) is an N6-succinyllysine.

It belongs to the AB hydrolase superfamily. Epoxide hydrolase family. In terms of assembly, homodimer. Mg(2+) is required as a cofactor. In terms of processing, the covalent modification of cysteine by 15-deoxy-Delta12,14-prostaglandin-J2 is autocatalytic and reversible. It may occur as an alternative to other cysteine modifications, such as S-nitrosylation and S-palmitoylation.

Its subcellular location is the cytoplasm. It localises to the peroxisome. The enzyme catalyses an epoxide + H2O = an ethanediol. It carries out the reaction (9S,10S)-10-hydroxy-9-(phosphooxy)octadecanoate + H2O = (9S,10S)-9,10-dihydroxyoctadecanoate + phosphate. The catalysed reaction is (14R,15S)-epoxy-(5Z,8Z,11Z)-eicosatrienoate + H2O = (14R,15R)-dihydroxy-(5Z,8Z,11Z)-eicosatrienoate. Inhibited by 1-(1-acetylpiperidin-4-yl)-3-(4-(trifl uoromethoxy)phenyl)urea (TPAU), 1-cyclohexyl-3-dodecylurea (CDU), 12-(3-adamantan-1-yl-ureido)-dodecanoic acid (AUDA), 1-((3S, 5S, 7S)-adamantan-1-yl)-3-(5-(2-(2-ethoxyethoxy) ethoxy)pentyl)urea (AEPU), N-adamantyl-N[']-cyclohexyl urea (ACU), 4-(((1S, 4S)-4-(3-((3S, 5S, 7S)-adamantan-1-yl) ureido)cyclohexyl)oxy)benzoic acid (c-AUCB), 4-(((1R, 4R)-4-(3-((3S, 5S, 7S)-adamantan-1-yl)ureido)cyclohexyl)oxy)benzoic acid (t-AUCB), 4-(((1R, 4R)-4-(3-(4(trifluoromethoxy)phenyl)ureido)cyclohexyl)oxy)benzoic acid (t-TAUCB) and to a lesser extent by 8-(3-((3S, 5S, 7S)-adamantan-1-yl)ureido) octanoic acid (AUOA). In terms of biological role, bifunctional enzyme. The C-terminal domain has epoxide hydrolase activity and acts on epoxides (alkene oxides, oxiranes) and arene oxides. Plays a role in xenobiotic metabolism by degrading potentially toxic epoxides. Also determines steady-state levels of physiological mediators. The N-terminal domain has lipid phosphatase activity, with the highest activity towards threo-9,10-phosphonooxy-hydroxy-octadecanoic acid, followed by erythro-9,10-phosphonooxy-hydroxy-octadecanoic acid, 12-phosphonooxy-octadec-9Z-enoic acid and 12-phosphonooxy-octadec-9E-enoic acid. In Sus scrofa (Pig), this protein is Bifunctional epoxide hydrolase 2 (EPHX2).